We begin with the raw amino-acid sequence, 81 residues long: Gamma-conotoxin-like TxMEKL-0511 (81 aa).

An N-terminal signal peptide occupies residues 1-19; that stretch reads MEKLTILLLVAAVLLSIQA. Positions 20 to 45 are excised as a propeptide; that stretch reads LNQEKHQRAKINLLSKRKPPAERWWR. Cystine bridges form between Cys-49–Cys-63, Cys-56–Cys-67, and Cys-62–Cys-72.

It belongs to the conotoxin O2 superfamily. In terms of tissue distribution, expressed by the venom duct.

The protein resides in the secreted. Its function is as follows. Gamma-conotoxins may act on voltage-gated non-specific cation pacemaker channels (HCN). This chain is Gamma-conotoxin-like TxMEKL-0511, found in Conus textile (Cloth-of-gold cone).